The chain runs to 395 residues: Leukosialin (395 aa).

Positions 1-19 (MALHLLLLFGACWVQVASP) are cleaved as a signal peptide. Residues 20–248 (DSLQRTTMLP…TRSPSQESSG (229 aa)) lie on the Extracellular side of the membrane. A compositionally biased stretch (polar residues) spans 27–56 (MLPSTPHITAPSTSEAQNASPSVSVGSGTV). The tract at residues 27–245 (MLPSTPHITA…PITTRSPSQE (219 aa)) is disordered. Low complexity predominate over residues 73-88 (SLTPLETTELSSLETS). 2 stretches are compositionally biased toward polar residues: residues 89–111 (AGAS…SKTS) and 145–154 (TAASTSISKG). Low complexity predominate over residues 155–166 (TSAPPTTVTTSS). Asn167 carries an N-linked (GlcNAc...) asparagine glycan. A compositionally biased stretch (polar residues) spans 167 to 196 (NETSGPSVATTVSSKTSGPPVTTATGSLGP). Low complexity predominate over residues 205-241 (ATTATSSVESSSVARGTSVSSRKTSTTSTQDPITTRS). The helical transmembrane segment at 249–271 (MLLVPMLIALVVVLALVALLLLW) threads the bilayer. Residues 272–302 (RQRQKRRTGALTLSGGGKRNGVVDAWAGPAR) form a required for interaction with EZR, MSN and RDX and for co-localization to microvilli region. Residues 272–395 (RQRQKRRTGA…AKDEAAPQSL (124 aa)) lie on the Cytoplasmic side of the membrane. The Nuclear localization signal signature appears at 276 to 290 (KRRTGALTLSGGGKR). Phosphoserine is present on residues Ser285 and Ser328. The disordered stretch occupies residues 303 to 395 (VPDEEATTTS…AKDEAAPQSL (93 aa)). The span at 327–338 (GSGQRPTLTTFF) shows a compositional bias: polar residues. A Phosphothreonine modification is found at Thr333. Phosphoserine is present on residues Ser339 and Ser343. Ser347 carries the post-translational modification Phosphoserine; by PKC/PRKCQ. The residue at position 371 (Ser371) is a Phosphoserine. Residue Thr378 is modified to Phosphothreonine. The span at 385 to 395 (QAKDEAAPQSL) shows a compositional bias: basic and acidic residues.

In terms of assembly, interacts with SIGLEC1. As to quaternary structure, interacts with isoform 2 of HIPK2. Interacts with CTNNB1. Interacts with RDX (via FERM domain). Interacts with EZR. Interacts with MSN. Post-translationally, phosphorylation at Ser-347 is regulated by chemokines, requires its association with ERM proteins (EZR, RDX and MSN) and is essential for its function in the regulation of T-cell trafficking to lymph nodes. In terms of processing, has a high content of sialic acid and O-linked carbohydrate structures. Cleavage by CTSG releases its extracellular domain and triggers its intramembrane proteolysis by gamma-secretase releasing the CD43 cytoplasmic tail chain (CD43-ct) which translocates to the nucleus. Post-translationally, sumoylated. As to expression, cell surface of thymocytes, T-lymphocytes, neutrophils, plasma cells and myelomas.

It is found in the membrane. The protein localises to the cell projection. The protein resides in the microvillus. It localises to the uropodium. Its subcellular location is the nucleus. It is found in the PML body. Predominant cell surface sialoprotein of leukocytes which regulates multiple T-cell functions, including T-cell activation, proliferation, differentiation, trafficking and migration. Positively regulates T-cell trafficking to lymph-nodes via its association with ERM proteins (EZR, RDX and MSN). Negatively regulates Th2 cell differentiation and predisposes the differentiation of T-cells towards a Th1 lineage commitment. Promotes the expression of IFN-gamma by T-cells during T-cell receptor (TCR) activation of naive cells and induces the expression of IFN-gamma by CD4(+) T-cells and to a lesser extent by CD8(+) T-cells. Plays a role in preparing T-cells for cytokine sensing and differentiation into effector cells by inducing the expression of cytokine receptors IFNGR and IL4R, promoting IFNGR and IL4R signaling and by mediating the clustering of IFNGR with TCR. Acts as a major E-selectin ligand responsible for Th17 cell rolling on activated vasculature and recruitment during inflammation. Mediates Th17 cells, but not Th1 cells, adhesion to E-selectin. Acts as a T-cell counter-receptor for SIGLEC1. In terms of biological role, protects cells from apoptotic signals, promoting cell survival. The chain is Leukosialin (Spn) from Mus musculus (Mouse).